The chain runs to 350 residues: tRNA-splicing endonuclease (350 aa).

Catalysis depends on residues Tyr286, His297, and Lys328.

This sequence belongs to the tRNA-intron endonuclease family. Archaeal long subfamily. Homodimer.

It catalyses the reaction pretRNA = a 3'-half-tRNA molecule with a 5'-OH end + a 5'-half-tRNA molecule with a 2',3'-cyclic phosphate end + an intron with a 2',3'-cyclic phosphate and a 5'-hydroxyl terminus.. Functionally, endonuclease that removes tRNA introns. Cleaves pre-tRNA at the 5'- and 3'-splice sites to release the intron. The products are an intron and two tRNA half-molecules bearing 2',3' cyclic phosphate and 5'-OH termini. Recognizes a pseudosymmetric substrate in which 2 bulged loops of 3 bases are separated by a stem of 4 bp. The protein is tRNA-splicing endonuclease of Methanosarcina barkeri (strain Fusaro / DSM 804).